Here is a 1592-residue protein sequence, read N- to C-terminus: MTGFEIFKKKYQVIQILNEINNNLEERLISIAKDKSGKLCVLKEIKYLNNKKKLEEFKKEEKNEEGIQKRIYQRNFNLEFNHLKNFSQMNHTSIIKYIEHIESKDEFGLVDRCIFVTEYYEDGDLSSIKEIEFKDIINLFLKMLINLKEFQNVIIHRDIKPENIFLRKFKNNDGKVELDCYLGDYGSAQTLYTQNKSTLIGTNQYIAPEVIEKKGHTNLIDIYSLGKTLLSLSKRNTGFVYNRIYLKLFEIMTNPFETRPNVNQLIEFMCRHHENLKYTLLVSDFQHRDSIKCLNYLKEKLIGILDNKTNPLKKIHIDMEFQGKTYHCNGVLRSEYLRNEYILENYPINNNNNNNNNNNNNNNNNNNNNNNNNNNNNNNNNNNNNNNNNNNNNNNNNNNNNNEGEVVQVIELVSTDEKHYSVLEGHINLSESPILNSLSFHDFKVIRGTAPIMHFNDINTSTTGEEEEEEKKDNLKRQNENNQIEQEDKGEKHLKETLNNNNNNNNNNNNNNNNNNNNNNNNSNYNSNRKCLLVLVPMKNHSFRLYKDILKNADETTVEIIQLKAIFHSLLASYLVSLTGVDFALQFLIRGDGINVYFEPPQPSDTTTSNNGEIKLTDYGFKFLFPFKHVSTVYSECNSTYFDIFPQSIPVKNPLVKEIQQFFKDESQTKIPFTTIFQRLISIVLREEYQYKKYKELEYYFEAFNSIDHHYQQLKINNENLVKSEYITRLIDSKEIIKVVNHLTFMPVDDYFFYVVPHNEKVYGIEVYKNFQDIDFFGHAINIIRLSLAILNDHSKHFKFIDAHKDINSSIYYFVYELPPSLASNYKSTSEIQINNKNNNNFYNNNNNNNNNNNNNNNNNNNSNDKSDNENKLLFKQLINQHFNNCIEFINNINTFAREKNPINILLYSMHTIITKNEMNVSSLYYSYMLFGKVNQCIIGSFYDIGKWVYGDQFEKKIKSATFLKNLQYLVWYKMSMISNNHHQVYFSLSNLYSILNEDDKDMMILNLESSLKINENNENEESLPQKLFKLDDIEFGDNFKYSKILIGGICYYILNIKEGDIFKEDQFGLEKKILLLELKQLESGKKYLCFRKQSHQTNTLKELKFNCRTINKKINDEIILEPLFVVEDSNVTFHFYEYKSSFENIKSIESYSKDNSTDYNGIVIIRSLLYYIQYYLSNYKNDDDGSDDDNDNDNNRSLKLVLVNMKDNESLIYLDIQYLIYRLYGVDISLTNEWTKINESLINGTPSLITNFIQTNRNKILNDSICLEILSNELMIKFKPIEIEIQREINHVTSVVSVVDVDVSGNSSKKKFVRKAIGSIIDLKIIGKNYGGIDLSNPRSLGTYNLIGDSVFRNISFFENKKLFEKFDTNVNFQKEIEFVKNYSKFLNFDISNRIPREYSILKSIKGMNGVVQIDSWYLENDIIYILMDYFDGQNLLEVSQDLINDFTLFSILNQLSKILFELETVYSIHHRDLKPDNILIKNDLTICLADFGISHFSKELKNDQDLYYSKDGTLGYQSPEIYSSELRGNGDIKNQPYKMDVFGLRCVMKYLMSKFNSSSSKLKELVEKMGFFNYDDRISLKELIECLNKL.

One can recognise a Protein kinase 1 domain in the interval 1–302 (MTGFEIFKKK…CLNYLKEKLI (302 aa)). Residues 2 to 10 (TGFEIFKKK) and Lys-43 each bind ATP. Asp-158 serves as the catalytic Proton acceptor. Disordered regions lie at residues 348–402 (INNN…NNNN), 455–526 (FNDI…SNYN), and 837–867 (KNNN…NDKS). A compositionally biased stretch (low complexity) spans 349-402 (NNNNNNNNNNNNNNNNNNNNNNNNNNNNNNNNNNNNNNNNNNNNNNNNNNNNNN). Residues 461–518 (STTGEEEEEEKKDNLKRQNENNQIEQEDKGEKHLKETLNNNNNNNNNNNNNNNNNNNN) adopt a coiled-coil conformation. The span at 486-496 (QEDKGEKHLKE) shows a compositional bias: basic and acidic residues. Composition is skewed to low complexity over residues 499-526 (NNNN…SNYN) and 837-864 (KNNN…NNSN). A Protein kinase 2 domain is found at 1342-1592 (LGTYNLIGDS…KELIECLNKL (251 aa)). ATP-binding positions include 1348-1356 (IGDSVFRNI) and Lys-1376. The Proton acceptor role is filled by Asp-1474.

This sequence belongs to the protein kinase superfamily. Ser/Thr protein kinase family.

It carries out the reaction L-seryl-[protein] + ATP = O-phospho-L-seryl-[protein] + ADP + H(+). The catalysed reaction is L-threonyl-[protein] + ATP = O-phospho-L-threonyl-[protein] + ADP + H(+). In Dictyostelium discoideum (Social amoeba), this protein is Probable serine/threonine-protein kinase DDB_G0293958.